A 121-amino-acid polypeptide reads, in one-letter code: SPbeta prophage-derived uncharacterized protein YorW (121 aa).

This chain is SPbeta prophage-derived uncharacterized protein YorW (yorW), found in Bacillus subtilis (strain 168).